The chain runs to 259 residues: Adenosylcobinamide-GDP ribazoletransferase (259 aa).

5 consecutive transmembrane segments (helical) span residues Leu-43–Gly-63, Ala-64–Leu-84, Phe-116–Val-136, Pro-141–Trp-161, and Thr-185–Thr-205.

This sequence belongs to the CobS family. Requires Mg(2+) as cofactor.

The protein resides in the cell inner membrane. It carries out the reaction alpha-ribazole + adenosylcob(III)inamide-GDP = adenosylcob(III)alamin + GMP + H(+). The enzyme catalyses alpha-ribazole 5'-phosphate + adenosylcob(III)inamide-GDP = adenosylcob(III)alamin 5'-phosphate + GMP + H(+). The protein operates within cofactor biosynthesis; adenosylcobalamin biosynthesis; adenosylcobalamin from cob(II)yrinate a,c-diamide: step 7/7. In terms of biological role, joins adenosylcobinamide-GDP and alpha-ribazole to generate adenosylcobalamin (Ado-cobalamin). Also synthesizes adenosylcobalamin 5'-phosphate from adenosylcobinamide-GDP and alpha-ribazole 5'-phosphate. The sequence is that of Adenosylcobinamide-GDP ribazoletransferase from Allorhizobium ampelinum (strain ATCC BAA-846 / DSM 112012 / S4) (Agrobacterium vitis (strain S4)).